Here is a 65-residue protein sequence, read N- to C-terminus: Large ribosomal subunit protein bL35 (65 aa).

Belongs to the bacterial ribosomal protein bL35 family.

In Caldicellulosiruptor bescii (strain ATCC BAA-1888 / DSM 6725 / KCTC 15123 / Z-1320) (Anaerocellum thermophilum), this protein is Large ribosomal subunit protein bL35.